The primary structure comprises 398 residues: uncharacterized protein (398 aa).

The chain crosses the membrane as a helical span at residues 88 to 108; that stretch reads IGFTIGFAIFFILLFLLSNMV.

It to B.megaterium SpoIV.

It is found in the cell membrane. This is an uncharacterized protein from Bacillus subtilis (strain 168).